A 95-amino-acid chain; its full sequence is Small ribosomal subunit protein bS6 (95 aa).

It belongs to the bacterial ribosomal protein bS6 family.

Binds together with bS18 to 16S ribosomal RNA. This Corynebacterium efficiens (strain DSM 44549 / YS-314 / AJ 12310 / JCM 11189 / NBRC 100395) protein is Small ribosomal subunit protein bS6.